A 396-amino-acid polypeptide reads, in one-letter code: MSKEKFTRTKPHVNVGTIGHVDHGKTTLTAALTKCMAAKFGGEFKAYDQIDAAPEERARGITIATAHVEYESAARHYAHVDCPGHADYVKNMITGAAQMDGAILVVSAADGPMPQTREHILLARQVGVPYIVVFLNKADMVDDPELLELVEMEVRELLSKYDFPGDDIPIIKGSALKALEGDGSEIGVPAVEALVQALDDYIPEPERAIDRPFLMPIEDVFSISGRGTVVTGRVERGIIKVGEEIEIVGIRPTAKTTCTGVEMFRKLLDQGQAGDNIGVLLRGTKREDVERGQVLAKPGSITPHTHFEAEIYVLSKEEGGRHTPFFNGYRPQFYFRTTDVTGAVTLPEGVEMVMPGDNVKIEVKLIAPIAMDEGLRFAVREGGRTVGAGVVSKIIE.

The tr-type G domain maps to 10–206 (KPHVNVGTIG…ALDDYIPEPE (197 aa)). Positions 19-26 (GHVDHGKT) are G1. 19-26 (GHVDHGKT) is a GTP binding site. Thr-26 serves as a coordination point for Mg(2+). A G2 region spans residues 60 to 64 (GITIA). Positions 81–84 (DCPG) are G3. GTP-binding positions include 81–85 (DCPGH) and 136–139 (NKAD). The segment at 136 to 139 (NKAD) is G4. Positions 174–176 (SAL) are G5.

It belongs to the TRAFAC class translation factor GTPase superfamily. Classic translation factor GTPase family. EF-Tu/EF-1A subfamily. In terms of assembly, monomer.

It localises to the cytoplasm. The enzyme catalyses GTP + H2O = GDP + phosphate + H(+). Its function is as follows. GTP hydrolase that promotes the GTP-dependent binding of aminoacyl-tRNA to the A-site of ribosomes during protein biosynthesis. The chain is Elongation factor Tu from Methylococcus capsulatus (strain ATCC 33009 / NCIMB 11132 / Bath).